The chain runs to 275 residues: uncharacterized protein (275 aa).

This is an uncharacterized protein from Acanthamoeba polyphaga mimivirus (APMV).